The chain runs to 103 residues: Large ribosomal subunit protein bL21 (103 aa).

This sequence belongs to the bacterial ribosomal protein bL21 family. Part of the 50S ribosomal subunit. Contacts protein L20.

This protein binds to 23S rRNA in the presence of protein L20. The sequence is that of Large ribosomal subunit protein bL21 from Saccharophagus degradans (strain 2-40 / ATCC 43961 / DSM 17024).